The following is a 99-amino-acid chain: NADH-quinone oxidoreductase subunit K (99 aa).

The next 3 membrane-spanning stretches (helical) occupy residues 3-23 (PDNY…GVML), 28-48 (IVVF…FVTF), and 59-79 (VIAF…LGII).

This sequence belongs to the complex I subunit 4L family. NDH-1 is composed of 14 different subunits. Subunits NuoA, H, J, K, L, M, N constitute the membrane sector of the complex.

The protein localises to the cell membrane. It carries out the reaction a quinone + NADH + 5 H(+)(in) = a quinol + NAD(+) + 4 H(+)(out). NDH-1 shuttles electrons from NADH, via FMN and iron-sulfur (Fe-S) centers, to quinones in the respiratory chain. The immediate electron acceptor for the enzyme in this species is believed to be a menaquinone. Couples the redox reaction to proton translocation (for every two electrons transferred, four hydrogen ions are translocated across the cytoplasmic membrane), and thus conserves the redox energy in a proton gradient. In Mycobacteroides abscessus (strain ATCC 19977 / DSM 44196 / CCUG 20993 / CIP 104536 / JCM 13569 / NCTC 13031 / TMC 1543 / L948) (Mycobacterium abscessus), this protein is NADH-quinone oxidoreductase subunit K.